The sequence spans 418 residues: Gene 68 protein (418 aa).

Disordered regions lie at residues 230–304 and 353–418; these read IPAP…IHTL and DTFE…ERRA. Residues 241-250 are compositionally biased toward basic and acidic residues; it reads RPSEGGDARP. Residues 257–266 are compositionally biased toward basic residues; the sequence is SRARSVHGRR. Residues 353–369 show a composition bias toward basic and acidic residues; that stretch reads DTFEDNRRDELRHDDSR. Over residues 395 to 404 the composition is skewed to basic residues; sequence PHLRRSRGRG.

The protein belongs to the herpesviridae US2 family.

This chain is Gene 68 protein, found in Equine herpesvirus 1 (strain Ab4p) (EHV-1).